The sequence spans 186 residues: MENNNNNHQQPPKDNEQLKSFWSKGMEGDLNVKNHEFPISRIKRIMKFDPDVSMIAAEAPNLLSKACEMFVMDLTMRSWLHAQESNRLTIRKSDVDAVVSQTVIFDFLRDDVPKDEGEPVVAAADPVDDVADHVAVPDLNNEELPPGTVIGTPVCYGLGIHAPHPQMPGAWTEEDATGANGGNGGN.

The disordered stretch occupies residues 166-186 (QMPGAWTEEDATGANGGNGGN).

It belongs to the NFYC/HAP5 subunit family. In terms of assembly, heterotrimeric transcription factor composed of three components, NF-YA, NF-YB and NF-YC. NF-YB and NF-YC must interact and dimerize for NF-YA association and DNA binding. Expressed in inflorescences and flowers.

Its subcellular location is the nucleus. Functionally, stimulates the transcription of various genes by recognizing and binding to a CCAAT motif in promoters. The polypeptide is Nuclear transcription factor Y subunit C-5 (NFYC5) (Arabidopsis thaliana (Mouse-ear cress)).